The sequence spans 630 residues: MIYPTQYDVIVIGGGHAGTEACLAAARMGCKTLLLTHNIETLGQMSCNPAIGGIGKSHLVKEIDALGGAMALATDKGGIQFRILNSRKGPAVRATRAQADRALYKAAVREILENQPNLDIFQQAADDLVVEGERVTGVTTQMGVTFKAPTVVLTAGTFLGGKIHIGMENHSGGRAGDPPSIALASRLRELPLRVDRLKTGTPPRIDARSVNFDGLEKQWGEEKTPVMSYMGSLADHPEQTCCWITHTNAQTHDFIRSGFDRSPMFTGVIEGVGPRYCPSIEDKVNRFADKDSHQIFIEPEGLKTHELYPNGISTSLPFDVQMAFVRSIKGFENAHITRPGYAIEYDFFDPRDLKYSFETKHIEGLFFAGQINGTTGYEEAGAQGLLAGLNAALKAQGKEAWCPRRDEAYIGVLADDLISMGTREPYRMFTSRAEYRLLLREDNADMRLTEKGRELGLVDDARWQAFCKKREAIELETQRMRTTWIQPNSAEANALAAKMPAELAREYSLLDLLKRPELTYDDLGSLKGEAVSDPQVAEQVEINTKYAGYINRQTDDIERMRQHENTVIPVEFDYMSVEGLSNELKQKLSEARPETLSRASRIPGVTPAAVSLILIYLKKRGLLKNKAALA.

13-18 is an FAD binding site; sequence GGGHAG. Residue 273–287 participates in NAD(+) binding; the sequence is GPRYCPSIEDKVNRF.

This sequence belongs to the MnmG family. Homodimer. Heterotetramer of two MnmE and two MnmG subunits. Requires FAD as cofactor.

It localises to the cytoplasm. Its function is as follows. NAD-binding protein involved in the addition of a carboxymethylaminomethyl (cmnm) group at the wobble position (U34) of certain tRNAs, forming tRNA-cmnm(5)s(2)U34. In Saccharophagus degradans (strain 2-40 / ATCC 43961 / DSM 17024), this protein is tRNA uridine 5-carboxymethylaminomethyl modification enzyme MnmG.